A 333-amino-acid chain; its full sequence is Adenosine deaminase (333 aa).

2 residues coordinate Zn(2+): His-12 and His-14. Substrate-binding residues include His-14, Asp-16, and Gly-170. His-197 contributes to the Zn(2+) binding site. Residue Glu-200 is the Proton donor of the active site. Residue Asp-278 participates in Zn(2+) binding. Substrate is bound at residue Asp-279.

It belongs to the metallo-dependent hydrolases superfamily. Adenosine and AMP deaminases family. Adenosine deaminase subfamily. Requires Zn(2+) as cofactor.

The enzyme catalyses adenosine + H2O + H(+) = inosine + NH4(+). It carries out the reaction 2'-deoxyadenosine + H2O + H(+) = 2'-deoxyinosine + NH4(+). In terms of biological role, catalyzes the hydrolytic deamination of adenosine and 2-deoxyadenosine. The chain is Adenosine deaminase from Salmonella schwarzengrund (strain CVM19633).